Consider the following 67-residue polypeptide: Conotoxin AbVIM (67 aa).

Residues 1 to 17 form the signal peptide; that stretch reads VLIIAVLFLTACQLIAT. Residues 18–40 constitute a propeptide that is removed on maturation; that stretch reads ASYARSERKHPDLRLSSRNSKLS. Disulfide bonds link Cys-43/Cys-57, Cys-50/Cys-61, and Cys-56/Cys-66.

The protein belongs to the conotoxin O1 superfamily. In terms of tissue distribution, expressed by the venom duct.

It localises to the secreted. The protein is Conotoxin AbVIM of Conus abbreviatus (Abbreviated cone).